We begin with the raw amino-acid sequence, 69 residues long: Cold shock-like protein CspC (69 aa).

In terms of domain architecture, CSD spans 6–66 (GQVKWFNESK…GQKGPAAVNV (61 aa)).

It localises to the cytoplasm. This chain is Cold shock-like protein CspC (cspC), found in Escherichia coli O157:H7.